Here is a 172-residue protein sequence, read N- to C-terminus: uncharacterized protein (172 aa).

Helical transmembrane passes span 7-27 (ILIS…CYGI), 59-79 (LMIF…LYLF), and 89-109 (FSLT…LFVK).

This sequence to M.jannaschii MJ0695.

Its subcellular location is the cell membrane. This is an uncharacterized protein from Methanocaldococcus jannaschii (strain ATCC 43067 / DSM 2661 / JAL-1 / JCM 10045 / NBRC 100440) (Methanococcus jannaschii).